Here is a 228-residue protein sequence, read N- to C-terminus: 6-carboxyhexanoate--CoA ligase (228 aa).

This sequence belongs to the BioW family. In terms of assembly, homodimer. Mg(2+) is required as a cofactor.

The enzyme catalyses heptanedioate + ATP + CoA = 6-carboxyhexanoyl-CoA + AMP + diphosphate. It participates in metabolic intermediate metabolism; pimeloyl-CoA biosynthesis; pimeloyl-CoA from pimelate: step 1/1. Catalyzes the transformation of pimelate into pimeloyl-CoA with concomitant hydrolysis of ATP to AMP. This Staphylococcus epidermidis (strain ATCC 35984 / DSM 28319 / BCRC 17069 / CCUG 31568 / BM 3577 / RP62A) protein is 6-carboxyhexanoate--CoA ligase.